Consider the following 151-residue polypeptide: UPF0178 protein YaiI (151 aa).

This sequence belongs to the UPF0178 family.

The chain is UPF0178 protein YaiI from Salmonella paratyphi C (strain RKS4594).